We begin with the raw amino-acid sequence, 523 residues long: MLRVFVLLIFNVNAYCMYLNWTSHDRPNIVMIMSDAFDGRLTFQPGNKVVQLPYINYMRELGSVFLNSYTNSPICCPSRAAMWSGQFVHLTQSWNNNKCLHPNATTWMDDLRKSGYHTHSMGKLDYTSGHHSVSNRVEAWTRDVPFLLRQEGRPVTDLVGDASTKRVMIKDWTITDAAVQWIRNTTASLTQPFALYLGLNLPHPYRTDSLGPTAGGSTFRTSPYWLNKVSYNQVSVPKWLRFKDMHPVDYYSTVTKNCSGHFTEEEIRNIRAFYYAMCAETDGMLGEVMAALRDTGSLNKTVVLFTSDHGDLAMEHRQFYKMSMFEGSSHVPLLIMGPGVKSGFEVSLPVSLVDIYPTVLDLAGVPQTGGLSGHSLIPLISRVSIHSAEPHPAWAFSEYHGCNANTSTYMLRIAEWKYIAYADGLNVPPQLFNLSKDESELRNIASQFPDVCQDLDKLLRSIVDYPSVSKSVHRYNKQQFLEWKQSLGDSYSQVIASLRWHVDWKKDAKSYERDIDEWLLGLD.

The signal sequence occupies residues 1 to 16 (MLRVFVLLIFNVNAYC). Ca(2+) contacts are provided by Asp35 and Cys75. The active-site Nucleophile is Cys75. Residue Cys75 is modified to 3-oxoalanine (Cys). A glycan (N-linked (GlcNAc...) asparagine) is linked at Asn103. Residues Lys123 and His246 each contribute to the substrate site. An N-linked (GlcNAc...) asparagine glycan is attached at Asn257. The Ca(2+) site is built by Asp308 and His309. Asn405 is a glycosylation site (N-linked (GlcNAc...) asparagine).

The protein belongs to the sulfatase family. The cofactor is Ca(2+). Post-translationally, the conversion to 3-oxoalanine (also known as C-formylglycine, FGly), of a serine or cysteine residue in prokaryotes and of a cysteine residue in eukaryotes, is critical for catalytic activity.

It localises to the secreted. It is found in the lysosome. It carries out the reaction an aryl sulfate + H2O = a phenol + sulfate + H(+). The catalysed reaction is Hydrolysis of the 2-sulfate groups of the 2-O-sulfo-D-glucuronate residues of chondroitin sulfate, heparin and heparitin sulfate.. Functionally, catalyzes the hydrolysis of pseudosubstrates such as p-nitrocatechol sulfate and p-nitrophenyl sulfate. Catalyzes the hydrolysis of the 2-sulfate groups of the 2-O-sulfo-D-glucuronate residues of chondroitin sulfate, heparin and heparitin sulfate. Acts selectively on 2-sulfoglucuronate and lacks activity against 2-sulfoiduronate. The polypeptide is Arylsulfatase K (arsk) (Danio rerio (Zebrafish)).